Consider the following 696-residue polypeptide: Elongation factor G (696 aa).

A tr-type G domain is found at 8-290 (ERYRNIGISA…KVIELMPAPT (283 aa)). GTP is bound by residues 17 to 24 (AHIDAGKT), 88 to 92 (DTPGH), and 142 to 145 (NKMD).

Belongs to the TRAFAC class translation factor GTPase superfamily. Classic translation factor GTPase family. EF-G/EF-2 subfamily.

It localises to the cytoplasm. Catalyzes the GTP-dependent ribosomal translocation step during translation elongation. During this step, the ribosome changes from the pre-translocational (PRE) to the post-translocational (POST) state as the newly formed A-site-bound peptidyl-tRNA and P-site-bound deacylated tRNA move to the P and E sites, respectively. Catalyzes the coordinated movement of the two tRNA molecules, the mRNA and conformational changes in the ribosome. This chain is Elongation factor G, found in Thiobacillus denitrificans (strain ATCC 25259 / T1).